Consider the following 802-residue polypeptide: Outer membrane usher protein PefC (802 aa).

An N-terminal signal peptide occupies residues 1-24 (MSFHHRVFKLSALSLALFSHLSFA). Cysteines 782 and 801 form a disulfide.

Belongs to the fimbrial export usher family.

The protein resides in the cell outer membrane. Involved in the export and assembly of FimA fimbrial subunits across the outer membrane. This Salmonella typhimurium (strain LT2 / SGSC1412 / ATCC 700720) protein is Outer membrane usher protein PefC (pefC).